The sequence spans 103 residues: Small ribosomal subunit protein uS10 (103 aa).

This sequence belongs to the universal ribosomal protein uS10 family. Part of the 30S ribosomal subunit.

Its function is as follows. Involved in the binding of tRNA to the ribosomes. In Campylobacter lari (strain RM2100 / D67 / ATCC BAA-1060), this protein is Small ribosomal subunit protein uS10.